A 111-amino-acid polypeptide reads, in one-letter code: WAP four-disulfide core domain protein 12 (111 aa).

The signal sequence occupies residues 1–23; it reads MGSSSFLVLTVSLALVTLVAAEG. Residues 27 to 74 form the WAP domain; sequence GIEKAGVCPADNVRCFKSDPPQCHTDQDCLGARKCCYLHCGFKCVIPV. 4 disulfides stabilise this stretch: Cys34–Cys62, Cys41–Cys66, Cys49–Cys61, and Cys55–Cys70. The interval 80–111 is disordered; that stretch reads GGNKDEDVSGPCPEPGWEAKSPGSSSTGCPQK. Positions 101 to 111 are enriched in polar residues; that stretch reads PGSSSTGCPQK.

The protein localises to the secreted. Its function is as follows. Antibacterial protein. Putative acid-stable proteinase inhibitor. This chain is WAP four-disulfide core domain protein 12 (WFDC12), found in Papio anubis (Olive baboon).